The following is a 275-amino-acid chain: Diaminopimelate epimerase (275 aa).

Positions 20 and 63 each coordinate substrate. The active-site Proton donor is Cys-72. Substrate-binding positions include 73 to 74 (GN), Asn-179, and 197 to 198 (ER). Catalysis depends on Cys-207, which acts as the Proton acceptor. Residue 208 to 209 (GT) coordinates substrate.

Belongs to the diaminopimelate epimerase family. Homodimer.

It localises to the cytoplasm. The enzyme catalyses (2S,6S)-2,6-diaminopimelate = meso-2,6-diaminopimelate. It functions in the pathway amino-acid biosynthesis; L-lysine biosynthesis via DAP pathway; DL-2,6-diaminopimelate from LL-2,6-diaminopimelate: step 1/1. Functionally, catalyzes the stereoinversion of LL-2,6-diaminopimelate (L,L-DAP) to meso-diaminopimelate (meso-DAP), a precursor of L-lysine and an essential component of the bacterial peptidoglycan. This Chlamydia trachomatis serovar A (strain ATCC VR-571B / DSM 19440 / HAR-13) protein is Diaminopimelate epimerase.